Reading from the N-terminus, the 1483-residue chain is Guanylyl cyclase, membrane (1483 aa).

Helical transmembrane passes span 50–70, 143–163, 168–188, 198–218, 219–239, and 242–262; these read ISII…YISP, FILR…TFTA, LWKL…LIFE, MVLL…PSML, ASGG…QIAG, and MVLL…ISRF. The interval 323–376 is disordered; the sequence is KKDEESNLTGKKQSKVVVSPPPPPTAAAPQQQDNEISTPQNSRKIVDPQSPSSL. A compositionally biased stretch (polar residues) spans 355-376; it reads DNEISTPQNSRKIVDPQSPSSL. The Guanylate cyclase 1 domain maps to 395–517; it reads TVLFCEIVNF…DTINTSSRMA (123 aa). 2 disordered regions span residues 598–619 and 672–838; these read NNTI…THPN and LTSP…GDDF. The segment covering 610 to 619 has biased composition (polar residues); that stretch reads GSATGPTHPN. 3 stretches are compositionally biased toward low complexity: residues 672 to 684, 693 to 712, and 720 to 765; these read LTSP…PQQS, SPRL…SSST, and NNNN…NNNN. A compositionally biased stretch (polar residues) spans 772 to 786; it reads SPISQNTTPTGSLSL. Transmembrane regions (helical) follow at residues 907-927, 982-1002, 1016-1036, 1040-1060, 1061-1081, and 1094-1114; these read ILAS…VDYF, IITG…YVVS, VVMV…SVPP, IPLD…CYNF, SGIK…FIEI, and IYLS…ITSY. The Guanylate cyclase 2 domain maps to 1168 to 1296; the sequence is TIFLSDIVGF…ESVQITQQME (129 aa). Mg(2+) contacts are provided by D1173, I1174, and D1217. Disordered regions lie at residues 1348–1369 and 1393–1483; these read QPEV…SLQY and NQND…SESS. Residues 1354 to 1369 are compositionally biased toward polar residues; it reads RSVSVSKSNFGGSLQY. The span at 1405–1416 shows a compositional bias: low complexity; sequence NENGNESSSSNI. A compositionally biased stretch (acidic residues) spans 1432–1444; that stretch reads NEDDESSYEDDQE. Residues 1446–1465 are compositionally biased toward low complexity; sequence NQYLNNSENNKNNNNNSNQI.

This sequence belongs to the adenylyl cyclase class-4/guanylyl cyclase family. Homodimer. Mg(2+) serves as cofactor.

The protein localises to the membrane. It carries out the reaction GTP = 3',5'-cyclic GMP + diphosphate. With respect to regulation, activated by guanosine 5'-3-O-(thio)triphosphate (GTPgammaS). Inhibited by calcium. In terms of biological role, synthesizes cyclic GMP (cGMP) from GTP, after activation by heterotrimeric or monomeric G proteins. Involved in chemotaxis. This chain is Guanylyl cyclase, membrane (gca), found in Dictyostelium discoideum (Social amoeba).